The following is a 248-amino-acid chain: Probable transcriptional regulatory protein blr1534 (248 aa).

The disordered stretch occupies residues 1–21; sequence MAGHSQFKNIMHRKGRQDAQK.

It belongs to the TACO1 family.

It localises to the cytoplasm. In Bradyrhizobium diazoefficiens (strain JCM 10833 / BCRC 13528 / IAM 13628 / NBRC 14792 / USDA 110), this protein is Probable transcriptional regulatory protein blr1534.